The following is a 568-amino-acid chain: Putative F-box protein At5g39480 (568 aa).

One can recognise an F-box domain in the interval 9 to 55 (ACLLLTLPEDVFAVISRFLSPSDICNLILCGKSLPALVDTEKMWLVQ). Residues 315–337 (TNVLGESSSSKNTTPSQSEIRVS) are disordered. A compositionally biased stretch (low complexity) spans 321 to 332 (SSSSKNTTPSQS).

This is Putative F-box protein At5g39480 from Arabidopsis thaliana (Mouse-ear cress).